A 600-amino-acid chain; its full sequence is ATP-dependent RNA helicase DDX55 (600 aa).

A Q motif motif is present at residues 9 to 37 (WESLPVPLHPQVLGALRELGFPYMTPVQS). Residues 40 to 223 (IPLFMRNKDV…RAGLRNPVRV (184 aa)) form the Helicase ATP-binding domain. 53–60 (AVTGSGKT) contacts ATP. The short motif at 171–174 (DEAD) is the DEAD box element. Residues 254 to 402 (KFNQLVHFLR…EMKPQRNTAD (149 aa)) enclose the Helicase C-terminal domain. A compositionally biased stretch (basic and acidic residues) spans 500–513 (EQQRREKTENEGRR). The tract at residues 500–550 (EQQRREKTENEGRRKFIKNKAWSKQKAKKEKKKKMNEKRKREEGSDIEDED) is disordered. Residues 514-537 (KFIKNKAWSKQKAKKEKKKKMNEK) show a composition bias toward basic residues. The interval 533–562 (KMNEKRKREEGSDIEDEDMEELLNDTRLLK) is important for nuclear localization. Residues S544 and S594 each carry the phosphoserine modification.

It belongs to the DEAD box helicase family. DDX55/SPB4 subfamily. Interacts with 28S rRNA. Interacts with double-stranded RNA substrates in vitro; the interaction stimulates ATPase activity.

It localises to the nucleus. The protein resides in the nucleoplasm. It carries out the reaction ATP + H2O = ADP + phosphate + H(+). Probable ATP-binding RNA helicase. Has ATPase activity and is involved in the maturation of precursor large subunit rRNAs. The protein is ATP-dependent RNA helicase DDX55 of Homo sapiens (Human).